The sequence spans 485 residues: MDATRKPLRIPPAMALYAEEQGVFDIIQKMVKKVLVDRPKDPIQYMIDHLSNDNDDVPRVFILGPPASGKHTMAKLLCKRLNATHLTPESVLSSDVSLLAKEAQSYRDKGQEVPDELWAKLMQQRLSKVDCIKRGWILEGFPKTREQALKLQMAGICPDHLVVLDAPDIVLIERNMGKRIDTANGEVYHTTFDWPSDPTVQRNLVEPEGISEEETGLRLIEYHRNIPGILRTYPKTSKKINADQPYMDVFSQVLTFVLSKPRSLAPHTPRILLYGPPGSGRSLQASLLAQKYGIVNICCGQVLKEAVADQTKLGEVIQPYIENDQQVPDNLVLKILTEHLSSLESATHGWVLHGFPRDTDQAALLKDAGFVPNRVFSLDLSDDVVIERLSLCMTDPVSGERYHDIYKPAPSSEVHERLQQNPRHSEQRVQARLDMYHANAEELDEFYPDVIHINADQDPYTVFEFIESYTVSPLPRPLPEEPTSP.

Adenylate kinase regions lie at residues 58–258 and 269–472; these read PRVF…TFVL and PRIL…YTVS. Residue 67-72 coordinates ATP; that stretch reads ASGKHT. Residues 87-113 are NMP 1; the sequence is TPESVLSSDVSLLAKEAQSYRDKGQEV. AMP contacts are provided by residues 140-143 and Gln147; that span reads GFPK. Positions 177–206 are LID 1; it reads GKRIDTANGEVYHTTFDWPSDPTVQRNLVE. Arg218 contacts AMP. 278–283 serves as a coordination point for ATP; the sequence is GSGRSL. The tract at residues 298-327 is NMP 2; that stretch reads CCGQVLKEAVADQTKLGEVIQPYIENDQQV. Residues 325 to 327, 354 to 357, and Gln361 contribute to the AMP site; these read QQV and GFPR. The interval 391–424 is LID 2; it reads LCMTDPVSGERYHDIYKPAPSSEVHERLQQNPRH. Arg432 serves as a coordination point for AMP.

This sequence belongs to the adenylate kinase family.

Its subcellular location is the cytoplasm. The protein resides in the cytosol. It catalyses the reaction AMP + ATP = 2 ADP. The enzyme catalyses a 2'-deoxyribonucleoside 5'-diphosphate + ATP = a 2'-deoxyribonucleoside 5'-triphosphate + ADP. It carries out the reaction a ribonucleoside 5'-diphosphate + ATP = a ribonucleoside 5'-triphosphate + ADP. Its function is as follows. Nucleoside monophosphate (NMP) kinase that catalyzes the reversible transfer of the terminal phosphate group between nucleoside triphosphates and monophosphates. Has highest activity toward AMP, and weaker activity toward dAMP, CMP and dCMP. Also displays broad nucleoside diphosphate kinase activity. This chain is Adenylate kinase 8 (ak8), found in Xenopus tropicalis (Western clawed frog).